Reading from the N-terminus, the 275-residue chain is Large ribosomal subunit protein uL2 (275 aa).

The interval 214–275 is disordered; that stretch reads RWRGNRPTVR…NKFILSHRNK (62 aa). Residues 255-275 are compositionally biased toward basic residues; that stretch reads KGKKTRSNKRTNKFILSHRNK.

Belongs to the universal ribosomal protein uL2 family. As to quaternary structure, part of the 50S ribosomal subunit. Forms a bridge to the 30S subunit in the 70S ribosome.

In terms of biological role, one of the primary rRNA binding proteins. Required for association of the 30S and 50S subunits to form the 70S ribosome, for tRNA binding and peptide bond formation. It has been suggested to have peptidyltransferase activity; this is somewhat controversial. Makes several contacts with the 16S rRNA in the 70S ribosome. In Blochmanniella pennsylvanica (strain BPEN), this protein is Large ribosomal subunit protein uL2.